The chain runs to 20 residues: uncharacterized protein (20 aa).

This is an uncharacterized protein from Escherichia coli (strain K12).